The following is a 185-amino-acid chain: Elongation factor P (185 aa).

Belongs to the elongation factor P family.

The protein localises to the cytoplasm. It functions in the pathway protein biosynthesis; polypeptide chain elongation. In terms of biological role, involved in peptide bond synthesis. Stimulates efficient translation and peptide-bond synthesis on native or reconstituted 70S ribosomes in vitro. Probably functions indirectly by altering the affinity of the ribosome for aminoacyl-tRNA, thus increasing their reactivity as acceptors for peptidyl transferase. The sequence is that of Elongation factor P from Bacillus licheniformis (strain ATCC 14580 / DSM 13 / JCM 2505 / CCUG 7422 / NBRC 12200 / NCIMB 9375 / NCTC 10341 / NRRL NRS-1264 / Gibson 46).